A 99-amino-acid chain; its full sequence is UPF0320 protein YER188C-A (99 aa).

It belongs to the UPF0320 family.

The polypeptide is UPF0320 protein YER188C-A (Saccharomyces cerevisiae (strain ATCC 204508 / S288c) (Baker's yeast)).